The primary structure comprises 295 residues: Pyridoxal 5'-phosphate synthase subunit PdxS (295 aa).

Asp-25 contributes to the D-ribose 5-phosphate binding site. Catalysis depends on Lys-82, which acts as the Schiff-base intermediate with D-ribose 5-phosphate. Gly-154 contributes to the D-ribose 5-phosphate binding site. Position 166 (Arg-166) interacts with D-glyceraldehyde 3-phosphate. D-ribose 5-phosphate is bound by residues Gly-215 and 236–237 (GS).

The protein belongs to the PdxS/SNZ family. As to quaternary structure, in the presence of PdxT, forms a dodecamer of heterodimers.

The enzyme catalyses aldehydo-D-ribose 5-phosphate + D-glyceraldehyde 3-phosphate + L-glutamine = pyridoxal 5'-phosphate + L-glutamate + phosphate + 3 H2O + H(+). The protein operates within cofactor biosynthesis; pyridoxal 5'-phosphate biosynthesis. In terms of biological role, catalyzes the formation of pyridoxal 5'-phosphate from ribose 5-phosphate (RBP), glyceraldehyde 3-phosphate (G3P) and ammonia. The ammonia is provided by the PdxT subunit. Can also use ribulose 5-phosphate and dihydroxyacetone phosphate as substrates, resulting from enzyme-catalyzed isomerization of RBP and G3P, respectively. In Staphylococcus haemolyticus (strain JCSC1435), this protein is Pyridoxal 5'-phosphate synthase subunit PdxS.